The chain runs to 859 residues: Envelope glycoprotein (859 aa).

Residues 1 to 6 (MVSIAF) constitute a propeptide that is removed on maturation. Over 7–614 (YGGIPGGIST…KDLWSHIGNW (608 aa)) the chain is Extracellular. N40, N112, N141, N148, N184, N201, N214, N233, N244, N282, N313, N340, N346, N368, N399, N406, N411, and N422 each carry an N-linked (GlcNAc...) asparagine; by host glycan. Positions 446-466 (FGISAIVAAIVAATAIAASAT) are fusion peptide. N-linked (GlcNAc...) asparagine; by host glycosylation is found at N483 and N490. Residues 498–513 (LIERQIKILYAMILQT) form an immunosuppression region. N-linked (GlcNAc...) asparagine; by host glycans are attached at residues N550 and N557. Coiled-coil stretches lie at residues 576-624 (ILTI…SIIK) and 663-699 (KKFY…YCKQ). A helical transmembrane segment spans residues 615–635 (IPGLGASIIKYIVMFLLIYLL). Residues 636 to 859 (LTSSPKILRA…TSHVSMPQYV (224 aa)) are Cytoplasmic-facing.

In terms of assembly, the mature envelope protein (Env) consists of a trimer of SU-TM heterodimers attached by noncovalent interactions or by a labile interchain disulfide bond. Post-translationally, specific enzymatic cleavages in vivo yield mature proteins. Envelope glycoproteins are synthesized as an inactive precursor that is N-glycosylated and processed likely by host cell furin or by a furin-like protease in the Golgi to yield the mature SU and TM proteins. The cleavage site between SU and TM requires the minimal sequence [KR]-X-[KR]-R.

It localises to the virion membrane. The protein resides in the host cell membrane. Functionally, the surface protein (SU) attaches the virus to the host cell by binding to its receptor. This interaction triggers the refolding of the transmembrane protein (TM) and is thought to activate its fusogenic potential by unmasking its fusion peptide. Fusion occurs at the host cell plasma membrane. In terms of biological role, the transmembrane protein (TM) acts as a class I viral fusion protein. Under the current model, the protein has at least 3 conformational states: pre-fusion native state, pre-hairpin intermediate state, and post-fusion hairpin state. During viral and target cell membrane fusion, the coiled coil regions (heptad repeats) assume a trimer-of-hairpins structure, positioning the fusion peptide in close proximity to the C-terminal region of the ectodomain. The formation of this structure appears to drive apposition and subsequent fusion of viral and target cell membranes. Membranes fusion leads to delivery of the nucleocapsid into the cytoplasm. This chain is Envelope glycoprotein (env), found in Equus asinus (Donkey).